We begin with the raw amino-acid sequence, 653 residues long: Sodium-dependent phosphate transporter 2 (653 aa).

Over Met-1–Gly-5 the chain is Extracellular. Residues Tyr-6–Ala-26 form a helical membrane-spanning segment. Residues Asn-27–Gln-46 are Cytoplasmic-facing. The helical transmembrane segment at Ala-47–Gly-67 threads the bilayer. Topologically, residues Glu-68–Thr-86 are extracellular. N-linked (GlcNAc...) asparagine glycosylation is present at Asn-81. Residues Leu-87–Phe-107 form a helical membrane-spanning segment. Residues Leu-108 to Arg-109 are Cytoplasmic-facing. Residues Leu-110–Ile-130 traverse the membrane as a helical segment. Over Gly-131–Lys-142 the chain is Extracellular. Residues Ile-143–Ile-163 form a helical membrane-spanning segment. Over Leu-164–Thr-190 the chain is Cytoplasmic. The chain crosses the membrane as a helical span at residues Ile-191–Pro-211. The Extracellular portion of the chain corresponds to Ile-212–Trp-213. The chain crosses the membrane as a helical span at residues Ala-214–Val-234. At Cys-235 to Glu-483 the chain is on the cytoplasmic side. Phosphoserine is present on residues Ser-253, Ser-256, Ser-259, and Ser-268. The segment at Pro-275–Tyr-311 is disordered. Polar residues predominate over residues Ser-295 to Gly-304. Ser-316 and Ser-385 each carry phosphoserine. Positions Ser-459–Glu-478 are disordered. The helical transmembrane segment at Val-484–Gly-504 threads the bilayer. Residues Gly-505–Ala-531 are Extracellular-facing. Residues Val-532 to Trp-552 form a helical membrane-spanning segment. Topologically, residues Gly-553–Gly-572 are cytoplasmic. A helical membrane pass occupies residues Phe-573–Ser-587. Topologically, residues Asn-588 to Ser-594 are extracellular. The helical transmembrane segment at Thr-595–Arg-610 threads the bilayer. The Cytoplasmic portion of the chain corresponds to Ser-611 to Asn-622. Residues Ile-623–Ala-643 traverse the membrane as a helical segment. At Leu-644–Val-653 the chain is on the extracellular side.

This sequence belongs to the inorganic phosphate transporter (PiT) (TC 2.A.20) family. As to quaternary structure, homodimer.

The protein localises to the cell membrane. Its subcellular location is the apical cell membrane. The catalysed reaction is 2 Na(+)(out) + phosphate(out) = 2 Na(+)(in) + phosphate(in). Its function is as follows. Sodium-phosphate symporter which preferentially transports the monovalent form of phosphate with a stoichiometry of two sodium ions per phosphate ion. Plays a critical role in the determination of bone quality and strength by providing phosphate for bone mineralization. Required to maintain normal cerebrospinal fluid phosphate levels. Mediates phosphate-induced calcification of vascular smooth muscle cells (VCMCs) and can functionally compensate for loss of SLC20A1 in VCMCs. In terms of biological role, (Microbial infection) Functions as a retroviral receptor for feline leukemia virus subgroup B (FeLV-B). This chain is Sodium-dependent phosphate transporter 2 (SLC20A2), found in Felis catus (Cat).